Consider the following 114-residue polypeptide: uncharacterized protein (114 aa).

The protein resides in the mitochondrion. This is an uncharacterized protein from Arabidopsis thaliana (Mouse-ear cress).